A 575-amino-acid polypeptide reads, in one-letter code: Acyloxyacyl hydrolase (575 aa).

Positions 1–23 (MQSPWKILTVAPLFLLLSLQSSA) are cleaved as a signal peptide. The propeptide occupies 24 to 34 (SPANDDQSRPS). The Saposin B-type domain maps to 37–118 (NGHTCVGCVL…HTLEFCKQNT (82 aa)). The interval 38 to 70 (GHTCVGCVLVVSVIEQLAQVHNSTVQASMERLC) is important for enzyme activity, localization to cytoplasmic vesicles, and protein stability. Disulfide bonds link Cys41–Cys114, Cys44–Cys108, Cys70–Cys83, Cys123–Cys453, Cys160–Cys169, Cys206–Cys230, Cys249–Cys329, and Cys376–Cys459. N-linked (GlcNAc...) asparagine glycosylation is present at Asn59. Residues 173 to 177 (KLAME) are lipopolysaccharide binding. Residues Asp184, Asp186, Asp188, Tyr190, Asp205, Asn207, Asp208, Asp210, Val213, Asp223, Asp227, Asn229, Asn231, Ile233, and Glu245 each coordinate Ca(2+). Residue Asn207 is glycosylated (N-linked (GlcNAc...) asparagine). Residue Ser263 is part of the active site. N-linked (GlcNAc...) asparagine glycans are attached at residues Asn409 and Asn466.

As to quaternary structure, heterodimer of the large and small subunits; disulfide-linked. Requires Ca(2+) as cofactor. Post-translationally, cleaved into a large and a small subunit. In terms of processing, the small subunit is N-glycosylated.

The protein resides in the secreted. Its subcellular location is the cytoplasmic vesicle. It catalyses the reaction a 3-(acyloxy)acyl derivative of bacterial toxin + H2O = a 3-hydroxyacyl derivative of bacterial toxin + a fatty acid + H(+). Inhibited by EDTA. Functionally, removes the secondary (acyloxyacyl-linked) fatty acyl chains from the lipid A region of bacterial lipopolysaccharides. By breaking down LPS, terminates the host response to bacterial infection and prevents prolonged and damaging inflammatory responses. In peritoneal macrophages, seems to be important for recovery from a state of immune tolerance following infection by Gram-negative bacteria. The polypeptide is Acyloxyacyl hydrolase (Homo sapiens (Human)).